The chain runs to 166 residues: NADH-ubiquinone oxidoreductase chain 6 (166 aa).

5 helical membrane passes run 1–21, 26–46, 47–67, 87–107, and 139–159; these read MMYFVYLLSILLVLGFMAFAS, IYGGLSLVLSGGVGCGIVVSL, GGSFLGLIVFLVYLGGMLVVF, VFTNLLIMVGMLGVIWYYFSG, and CGGWELIFSGWILFLTIFVVL.

Belongs to the complex I subunit 6 family. Core subunit of respiratory chain NADH dehydrogenase (Complex I) which is composed of 45 different subunits.

It localises to the mitochondrion inner membrane. It catalyses the reaction a ubiquinone + NADH + 5 H(+)(in) = a ubiquinol + NAD(+) + 4 H(+)(out). In terms of biological role, core subunit of the mitochondrial membrane respiratory chain NADH dehydrogenase (Complex I) which catalyzes electron transfer from NADH through the respiratory chain, using ubiquinone as an electron acceptor. Essential for the catalytic activity and assembly of complex I. The sequence is that of NADH-ubiquinone oxidoreductase chain 6 (MT-ND6) from Ornithorhynchus anatinus (Duckbill platypus).